A 483-amino-acid polypeptide reads, in one-letter code: MYSATASNTFFLLSCFLLFCLLSAPSCVSMFSGIETGDLEKRDDLFPQILRDEAVARLYELGKVSDASGYLERTFLSPASMKAIDLIRKWMEDAGLRTWVDQMGNVHGRVDGANENAEALLIGSHMDTVVDAGMFDGSLGIVSAISAVKAMHVNGKLQKLKRPVEVIAFSDEEGVRFQTTFLGSGAIAGILPGTTLEISDKREVMIKDFLKENSMDITEESLLKLKYDPKSVWGYVEVHIEQGPVLEQVGFPLGVVKGIAGQTRLKVTVRGSQGHAGTVPMSMRQDPMAAAAEQIVVLESLCKHPEEYLSYDGHCSDSTVKSLSSSLVCTVGEISTWPSASNVIPGQVTYTVDIRAIDDLGREAVIYDLSKQIYQICDKRSVSCIIEHKHDAGAVICDSDLSSQLKSAAYSALKKMEGDIQDEVPTLMSGAGHDAMAISHLTKVGMLFVRCRGGISHSPQEHVLDNDVWAAGLATLSFLENLS.

The signal sequence occupies residues 1-30 (MYSATASNTFFLLSCFLLFCLLSAPSCVSM). Mn(2+) contacts are provided by His-125, Asp-136, Glu-173, His-239, and His-457.

This sequence belongs to the peptidase M20A family. Homodimer. Requires Mn(2+) as cofactor. Expressed in roots, stems and leaves. Not detected in nodules.

The protein resides in the endoplasmic reticulum. It catalyses the reaction allantoate + H2O + 2 H(+) = (S)-2-ureidoglycine + NH4(+) + CO2. With respect to regulation, inhibited by borate, fluoride, L-Asn and L-Asp. Functionally, involved in the catabolism of purine nucleotides. Can use allantoate as substrate. The sequential activity of AAH, UGLYAH and UAH allows a complete purine breakdown without the intermediate generation of urea. This chain is Allantoate deiminase 1, found in Glycine max (Soybean).